Reading from the N-terminus, the 188-residue chain is Defensin-like protein 99 (188 aa).

The first 28 residues, 1-28 (MGSLKLSTVVVTALVVCLSILLISPTEA), serve as a signal peptide directing secretion. Cystine bridges form between Cys-37-Cys-95, Cys-45-Cys-77, Cys-58-Cys-92, Cys-62-Cys-94, Cys-123-Cys-178, Cys-137-Cys-175, and Cys-141-Cys-177.

Belongs to the DEFL family.

It is found in the secreted. This Arabidopsis thaliana (Mouse-ear cress) protein is Defensin-like protein 99.